The chain runs to 1383 residues: DNA-directed RNA polymerase subunit beta'' (1383 aa).

Zn(2+) is bound by residues C220, C289, C296, and C299.

It belongs to the RNA polymerase beta' chain family. RpoC2 subfamily. In plastids the minimal PEP RNA polymerase catalytic core is composed of four subunits: alpha, beta, beta', and beta''. When a (nuclear-encoded) sigma factor is associated with the core the holoenzyme is formed, which can initiate transcription. Zn(2+) is required as a cofactor.

Its subcellular location is the plastid. The protein localises to the chloroplast. It catalyses the reaction RNA(n) + a ribonucleoside 5'-triphosphate = RNA(n+1) + diphosphate. DNA-dependent RNA polymerase catalyzes the transcription of DNA into RNA using the four ribonucleoside triphosphates as substrates. In Oenothera argillicola (Appalachian evening primrose), this protein is DNA-directed RNA polymerase subunit beta''.